The chain runs to 338 residues: uncharacterized protein (338 aa).

The TNase-like domain occupies 144-321 (HTLPVDVKAV…RAARVGLWAS (178 aa)). Catalysis depends on residues R228, E236, and R270.

This is an uncharacterized protein from Capnoides sempervirens (Rock-harlequin).